The following is a 185-amino-acid chain: Ribosome-recycling factor (185 aa).

The protein belongs to the RRF family.

The protein resides in the cytoplasm. Functionally, responsible for the release of ribosomes from messenger RNA at the termination of protein biosynthesis. May increase the efficiency of translation by recycling ribosomes from one round of translation to another. The sequence is that of Ribosome-recycling factor from Aliarcobacter butzleri (strain RM4018) (Arcobacter butzleri).